A 432-amino-acid chain; its full sequence is Ribosomal protein uS12 methylthiotransferase RimO (432 aa).

One can recognise an MTTase N-terminal domain in the interval 1-112 (MKIGVVSLGC…ILNYLGLKEK (112 aa)). Residues Cys10, Cys46, Cys75, Cys134, Cys138, and Cys141 each coordinate [4Fe-4S] cluster. In terms of domain architecture, Radical SAM core spans 120-350 (STPRSYAYLK…MAIQRGITRK (231 aa)). The TRAM domain occupies 353–422 (EEFLGKEIEV…DYDLAGRDTE (70 aa)).

This sequence belongs to the methylthiotransferase family. RimO subfamily. The cofactor is [4Fe-4S] cluster.

It localises to the cytoplasm. The catalysed reaction is L-aspartate(89)-[ribosomal protein uS12]-hydrogen + (sulfur carrier)-SH + AH2 + 2 S-adenosyl-L-methionine = 3-methylsulfanyl-L-aspartate(89)-[ribosomal protein uS12]-hydrogen + (sulfur carrier)-H + 5'-deoxyadenosine + L-methionine + A + S-adenosyl-L-homocysteine + 2 H(+). In terms of biological role, catalyzes the methylthiolation of an aspartic acid residue of ribosomal protein uS12. This is Ribosomal protein uS12 methylthiotransferase RimO from Aquifex aeolicus (strain VF5).